Consider the following 104-residue polypeptide: AVIToxin-VAR2 (104 aa).

Residues 1–19 (MRSLLCAPLLLLLLSAGES) form the signal peptide. 5 disulfides stabilise this stretch: cysteine 26/cysteine 38, cysteine 32/cysteine 50, cysteine 37/cysteine 78, cysteine 60/cysteine 86, and cysteine 80/cysteine 96.

Belongs to the AVIT (prokineticin) family. In terms of tissue distribution, expressed by the venom gland.

It localises to the secreted. Functionally, potent agonist for both PKR1/PROKR1 and PKR2/PROKR2. Potently contracts gastrointestinal (GI) smooth muscle. This chain is AVIToxin-VAR2, found in Varanus varius (Lace monitor lizard).